The chain runs to 95 residues: Aspartyl/glutamyl-tRNA(Asn/Gln) amidotransferase subunit C (95 aa).

The protein belongs to the GatC family. As to quaternary structure, heterotrimer of A, B and C subunits.

It catalyses the reaction L-glutamyl-tRNA(Gln) + L-glutamine + ATP + H2O = L-glutaminyl-tRNA(Gln) + L-glutamate + ADP + phosphate + H(+). It carries out the reaction L-aspartyl-tRNA(Asn) + L-glutamine + ATP + H2O = L-asparaginyl-tRNA(Asn) + L-glutamate + ADP + phosphate + 2 H(+). Functionally, allows the formation of correctly charged Asn-tRNA(Asn) or Gln-tRNA(Gln) through the transamidation of misacylated Asp-tRNA(Asn) or Glu-tRNA(Gln) in organisms which lack either or both of asparaginyl-tRNA or glutaminyl-tRNA synthetases. The reaction takes place in the presence of glutamine and ATP through an activated phospho-Asp-tRNA(Asn) or phospho-Glu-tRNA(Gln). This Acidithiobacillus ferrooxidans (strain ATCC 23270 / DSM 14882 / CIP 104768 / NCIMB 8455) (Ferrobacillus ferrooxidans (strain ATCC 23270)) protein is Aspartyl/glutamyl-tRNA(Asn/Gln) amidotransferase subunit C.